Reading from the N-terminus, the 485-residue chain is Glutamyl-tRNA(Gln) amidotransferase subunit A 1 (485 aa).

Active-site charge relay system residues include lysine 79 and serine 154. Residue serine 178 is the Acyl-ester intermediate of the active site.

This sequence belongs to the amidase family. GatA subfamily. Heterotrimer of A, B and C subunits.

It catalyses the reaction L-glutamyl-tRNA(Gln) + L-glutamine + ATP + H2O = L-glutaminyl-tRNA(Gln) + L-glutamate + ADP + phosphate + H(+). In terms of biological role, allows the formation of correctly charged Gln-tRNA(Gln) through the transamidation of misacylated Glu-tRNA(Gln) in organisms which lack glutaminyl-tRNA synthetase. The reaction takes place in the presence of glutamine and ATP through an activated gamma-phospho-Glu-tRNA(Gln). The protein is Glutamyl-tRNA(Gln) amidotransferase subunit A 1 (gatA1) of Clostridium acetobutylicum (strain ATCC 824 / DSM 792 / JCM 1419 / IAM 19013 / LMG 5710 / NBRC 13948 / NRRL B-527 / VKM B-1787 / 2291 / W).